Reading from the N-terminus, the 87-residue chain is Putative RNase MJ1548 (87 aa).

Catalysis depends on residues Arg65 and His70. The RX(4)HXY motif motif lies at Arg65–Tyr72. Tyr72 bears the O-di-AMP-tyrosine mark.

The protein belongs to the HepT RNase toxin family. As to quaternary structure, homodimer, probably forms a complex with cognate antitoxin MJ1547. Post-translationally, modified by cognate antitoxin MJ1547; probably at least 2 successive AMPylation events occur on Tyr-72.

Its function is as follows. Probable toxic component of a putative type VII toxin-antitoxin (TA) system, probably an RNase. Probably neutralized by cognate antitoxin MJ1547. Neutralization may be due to AMPylation by antitoxin MJ1547. The polypeptide is Putative RNase MJ1548 (Methanocaldococcus jannaschii (strain ATCC 43067 / DSM 2661 / JAL-1 / JCM 10045 / NBRC 100440) (Methanococcus jannaschii)).